Here is a 206-residue protein sequence, read N- to C-terminus: Cytochrome c oxidase subunit 3 (206 aa).

5 helical membrane passes run 26–46 (FLGFWFFLGGETILFATFFGT), 68–88 (LVFIMTMLLLTSSLTSVLAMF), 97–117 (AMMIWMWITVVLGLAFLGFEI), 143–163 (LVGLHGAHVAFGLSWIIVLLI), and 185–205 (WHFIDVVWVFIFTVVYLMGVG).

The protein belongs to the cytochrome c oxidase subunit 3 family.

It is found in the cell membrane. The catalysed reaction is 4 Fe(II)-[cytochrome c] + O2 + 8 H(+)(in) = 4 Fe(III)-[cytochrome c] + 2 H2O + 4 H(+)(out). The polypeptide is Cytochrome c oxidase subunit 3 (ctaE) (Alkalihalophilus pseudofirmus (strain ATCC BAA-2126 / JCM 17055 / OF4) (Bacillus pseudofirmus)).